Reading from the N-terminus, the 184-residue chain is Peptide deformylase (184 aa).

Residues Cys98 and His140 each coordinate Fe cation. Residue Glu141 is part of the active site. His144 is a Fe cation binding site.

Belongs to the polypeptide deformylase family. Requires Fe(2+) as cofactor.

It catalyses the reaction N-terminal N-formyl-L-methionyl-[peptide] + H2O = N-terminal L-methionyl-[peptide] + formate. Removes the formyl group from the N-terminal Met of newly synthesized proteins. Requires at least a dipeptide for an efficient rate of reaction. N-terminal L-methionine is a prerequisite for activity but the enzyme has broad specificity at other positions. The protein is Peptide deformylase of Bacteroides fragilis (strain ATCC 25285 / DSM 2151 / CCUG 4856 / JCM 11019 / LMG 10263 / NCTC 9343 / Onslow / VPI 2553 / EN-2).